The primary structure comprises 591 residues: Cytidine monophosphate-N-acetylneuraminic acid hydroxylase (591 aa).

Residues 12–110 (LEAEDVRNLK…AVLSETDGSL (99 aa)) enclose the Rieske domain. Positions 52, 54, 73, and 76 each coordinate [2Fe-2S] cluster.

This sequence belongs to the CMP-Neu5Ac hydroxylase family. It depends on [2Fe-2S] cluster as a cofactor.

The protein resides in the cytoplasm. It carries out the reaction CMP-N-acetyl-beta-neuraminate + 2 Fe(II)-[cytochrome b5] + O2 + 2 H(+) = CMP-N-glycoloyl-beta-neuraminate + 2 Fe(III)-[cytochrome b5] + H2O. It participates in amino-sugar metabolism; N-acetylneuraminate metabolism. Sialic acids are components of carbohydrate chains of glycoconjugates and are involved in cell-cell recognition and cell-pathogen interactions. Catalyzes the conversion of CMP-N-acetylneuraminic acid (CMP-Neu5Ac) into its hydroxylated derivative CMP-N-glycolylneuraminic acid (CMP-Neu5Gc), a sialic acid abundantly expressed at the surface of many cells. The chain is Cytidine monophosphate-N-acetylneuraminic acid hydroxylase (cmah) from Danio rerio (Zebrafish).